Reading from the N-terminus, the 356-residue chain is Glutamine synthetase (356 aa).

The GS beta-grasp domain occupies 19 to 99; the sequence is VIAEYIWIGG…VICDTYTPAG (81 aa). The GS catalytic domain occupies 106–356; the sequence is KRHGAAKIFS…IAETTLLWKP (251 aa).

The protein belongs to the glutamine synthetase family. In terms of assembly, homooctamer. Found at highest levels in root nodules.

The protein localises to the cytoplasm. The enzyme catalyses L-glutamate + NH4(+) + ATP = L-glutamine + ADP + phosphate + H(+). The protein is Glutamine synthetase (GLN1) of Alnus glutinosa (European alder).